Here is a 105-residue protein sequence, read N- to C-terminus: Urease subunit beta (105 aa).

The protein belongs to the urease beta subunit family. As to quaternary structure, heterotrimer of UreA (gamma), UreB (beta) and UreC (alpha) subunits. Three heterotrimers associate to form the active enzyme.

The protein resides in the cytoplasm. The catalysed reaction is urea + 2 H2O + H(+) = hydrogencarbonate + 2 NH4(+). It functions in the pathway nitrogen metabolism; urea degradation; CO(2) and NH(3) from urea (urease route): step 1/1. The sequence is that of Urease subunit beta from Marinobacter nauticus (strain ATCC 700491 / DSM 11845 / VT8) (Marinobacter aquaeolei).